Reading from the N-terminus, the 118-residue chain is Myotrophin (118 aa).

ANK repeat units lie at residues 1–30 (MGDK…DVNR), 34–65 (GGRK…NAAD), and 67–98 (HGIT…TVKG).

This sequence belongs to the myotrophin family.

Its subcellular location is the cytoplasm. The protein resides in the nucleus. It is found in the perinuclear region. Regulates NF-kappa-B transcription factor activity. Promotes growth of cardiomyocytes, but not cardiomyocyte proliferation. Promotes cardiac muscle hypertrophy. Plays a role in the regulation of the growth of actin filaments. Inhibits the activity of the F-actin-capping protein complex. The protein is Myotrophin (mtpn) of Xenopus tropicalis (Western clawed frog).